Consider the following 438-residue polypeptide: MASPLYSVVLGLAIVSAIVAPTSSTSRGTLLHHGQKRPQPGLRVDLEQVDSGKNLTKYELIKRAIKRGERRMRSINAMLQSSSGIETPVYAGDGEYLMNVAIGTPDSSFSAIMDTGSDLIWTQCEPCTQCFSQPTPIFNPQDSSSFSTLPCESQYCQDLPSETCNNNECQYTYGYGDGSTTQGYMATETFTFETSSVPNIAFGCGEDNQGFGQGNGAGLIGMGWGPLSLPSQLGVGQFSYCMTSYGSSSPSTLALGSAASGVPEGSPSTTLIHSSLNPTYYYITLQGITVGGDNLGIPSSTFQLQDDGTGGMIIDSGTTLTYLPQDAYNAVAQAFTDQINLPTVDESSSGLSTCFQQPSDGSTVQVPEISMQFDGGVLNLGEQNILISPAEGVICLAMGSSSQLGISIFGNIQQQETQVLYDLQNLAVSFVPTQCGAS.

The signal sequence occupies residues 1–24 (MASPLYSVVLGLAIVSAIVAPTSS). The propeptide at 25–79 (TSRGTLLHHGQKRPQPGLRVDLEQVDSGKNLTKYELIKRAIKRGERRMRSINAML) is activation peptide. Asn54 carries an N-linked (GlcNAc...) asparagine glycan. The Peptidase A1 domain occupies 96–431 (YLMNVAIGTP…DLQNLAVSFV (336 aa)). The active site involves Asp114. 6 disulfides stabilise this stretch: Cys124–Cys127, Cys130–Cys204, Cys151–Cys169, Cys156–Cys164, Cys241–Cys435, and Cys354–Cys395. The active site involves Asp315.

The protein belongs to the peptidase A1 family.

It is found in the secreted. The catalysed reaction is Similar to pepsin, but also cleaves on either side of Asp and at Lys-|-Arg.. With respect to regulation, inhibited by pepstatin and by diazoacetyl-D,L-norleucine methyl ester (DAN) in the presence of Cu(2+) ions. Functionally, extracellular proteinase found in the pitcher fluid of carnivorous plants. Digest prey for nitrogen uptake. The protein is Aspartic proteinase nepenthesin-2 (nep2) of Nepenthes gracilis (Slender pitcher plant).